We begin with the raw amino-acid sequence, 248 residues long: MSFVVIIPARFASTRLPGKPLLDINGKPMIVHVLERARESGAERIIVATDHEDVARAVEAAGGEVCMTRADHQSGTERLAEVVEKCGFSDDTVIVNVQGDEPMIPAVIIRQVAENLAQRQVGMATLAAPVHSAEEAFNPNVVKVVLDSEGYALYFSRATIPWDRDRFAKGLETVGDNFLRHLGIYGYRAGFIRRYVNWQPSPLEHIEMLEQLRVLWYGEKIHVAVAEQVPGTGVDTAEDLERVRAEMR.

This sequence belongs to the KdsB family.

It is found in the cytoplasm. It carries out the reaction 3-deoxy-alpha-D-manno-oct-2-ulosonate + CTP = CMP-3-deoxy-beta-D-manno-octulosonate + diphosphate. It functions in the pathway nucleotide-sugar biosynthesis; CMP-3-deoxy-D-manno-octulosonate biosynthesis; CMP-3-deoxy-D-manno-octulosonate from 3-deoxy-D-manno-octulosonate and CTP: step 1/1. Its pathway is bacterial outer membrane biogenesis; lipopolysaccharide biosynthesis. Activates KDO (a required 8-carbon sugar) for incorporation into bacterial lipopolysaccharide in Gram-negative bacteria. This chain is 3-deoxy-manno-octulosonate cytidylyltransferase, found in Escherichia fergusonii (strain ATCC 35469 / DSM 13698 / CCUG 18766 / IAM 14443 / JCM 21226 / LMG 7866 / NBRC 102419 / NCTC 12128 / CDC 0568-73).